Reading from the N-terminus, the 391-residue chain is Homocysteine-responsive endoplasmic reticulum-resident ubiquitin-like domain member 1 protein (391 aa).

Met-1 carries the post-translational modification N-acetylmethionine. At 1 to 263 (MESETEPEPV…VEEDDEINRD (263 aa)) the chain is on the cytoplasmic side. A Ubiquitin-like domain is found at 10-72 (VTLLVKSPNQ…LLDHQCLRDL (63 aa)). Positions 100-126 (KVAESTEEPAGSNRGQYPEDSSSDGLR) are disordered. Positions 112–124 (NRGQYPEDSSSDG) are enriched in polar residues. The segment at 115–200 (QYPEDSSSDG…ASGAFVPPPS (86 aa)) is interaction with UBQLN1. Ser-135 is modified (phosphoserine). A helical membrane pass occupies residues 264-284 (WLDWTYSAATFSVFLSILYFY). Over 285 to 289 (SSLSR) the chain is Lumenal. The chain crosses the membrane as a helical span at residues 290 to 310 (FLMVMGATVVMYLHHVGWFPF). The Cytoplasmic segment spans residues 311-391 (RPRPVQNFPN…LPEGPPAIAN (81 aa)). A disordered region spans residues 318–359 (FPNDGPPPDIVNQDPNNNLQEGTDPETEDPNHVPPDRGVLDG). Over residues 346–357 (DPNHVPPDRGVL) the composition is skewed to basic and acidic residues.

Interacts with PSEN1 and PSEN2. Interacts with UBXN6. Interacts with UBQLN1, UBQLN2 and UBQLN4. Component of the HRD1 complex, which comprises at least SYNV1/HRD1, FAM8A1, HERPUD1/HERP, OS9, SEL1L and UBE2J1. FAM8A1 binding to SYNV1 may promote recruitment of HERPUD1 to the HRD1 complex.

It is found in the endoplasmic reticulum membrane. Component of the endoplasmic reticulum quality control (ERQC) system also called ER-associated degradation (ERAD) involved in ubiquitin-dependent degradation of misfolded endoplasmic reticulum proteins. Binds to ubiquilins and this interaction is required for efficient degradation of CD3D via the ERAD pathway. The chain is Homocysteine-responsive endoplasmic reticulum-resident ubiquitin-like domain member 1 protein (HERPUD1) from Pongo abelii (Sumatran orangutan).